The primary structure comprises 171 residues: 16S rRNA aminocarboxypropyltransferase (171 aa).

Positions 17, 67, 90, and 109 each coordinate S-adenosyl-L-methionine.

It belongs to the TDD superfamily. TSR3 family.

The protein localises to the cytoplasm. The enzyme catalyses an N(1)-methylpseudouridine in rRNA + S-adenosyl-L-methionine = N(1)-methyl-N(3)-[(3S)-3-amino-3-carboxypropyl]pseudouridine in rRNA + S-methyl-5'-thioadenosine + H(+). Aminocarboxypropyltransferase that catalyzes the aminocarboxypropyl transfer on pseudouridine corresponding to position 914 in M.jannaschii 16S rRNA. It constitutes the last step in biosynthesis of the hypermodified N1-methyl-N3-(3-amino-3-carboxypropyl) pseudouridine (m1acp3-Psi). This chain is 16S rRNA aminocarboxypropyltransferase, found in Methanobrevibacter smithii (strain ATCC 35061 / DSM 861 / OCM 144 / PS).